The chain runs to 794 residues: Hyaluronan mediated motility receptor (794 aa).

The disordered stretch occupies residues 1 to 87 (MSFPKAPLKR…SQKNDKDVKR (87 aa)). At S20 the chain carries Phosphoserine. Positions 74 to 87 (SKKDSQKNDKDVKR) are enriched in basic and acidic residues. N134, N279, N446, N467, N488, N509, N530, N561, and N601 each carry an N-linked (GlcNAc...) asparagine glycan. The interval 365–630 (EEMTSEKNVF…ITDLKNQLRQ (266 aa)) is required for interaction with FAM83D. 5 repeat units span residues 442–462 (QEKYNDTAQSLRDVTAQLESV), 463–483 (QEKYNDTAQSLRDVTAQLESE), 484–504 (QEKYNDTAQSLRDVTAQLESE), 505–525 (QEKYNDTAQSLRDVTAQLESV), and 526–546 (QEKYNDTAQSLRDVTAQLESY). Residues 442-546 (QEKYNDTAQS…RDVTAQLESY (105 aa)) form a 5 X 21 AA tandem repeats region. Hyaluronic acid-binding regions lie at residues 719-729 (KQKIKHVVKLK) and 741-750 (KLRSQLVKRK). A Phosphothreonine modification is found at T784.

As to quaternary structure, interacts with ANKRD26. Interacts with DYNLL1. Interacts with FAM83D/CHICA. Ubiquitously expressed.

The protein localises to the cell surface. It is found in the cytoplasm. It localises to the cytoskeleton. The protein resides in the spindle. Receptor for hyaluronic acid (HA). Involved in cell motility. When hyaluronan binds to HMMR, the phosphorylation of a number of proteins, including the PTK2/FAK1 occurs. May also be involved in cellular transformation and metastasis formation, and in regulating extracellular-regulated kinase (ERK) activity. May act as a regulator of adipogenesis. The protein is Hyaluronan mediated motility receptor (Hmmr) of Mus musculus (Mouse).